We begin with the raw amino-acid sequence, 376 residues long: Phosphate acyltransferase (376 aa).

A disordered region spans residues 334–376; it reads AGSLEQAKRDAGGPGSASQMASPIAGPVSGQPAEPYSAQSSKA.

Belongs to the PlsX family. As to quaternary structure, homodimer. Probably interacts with PlsY.

It localises to the cytoplasm. The enzyme catalyses a fatty acyl-[ACP] + phosphate = an acyl phosphate + holo-[ACP]. It functions in the pathway lipid metabolism; phospholipid metabolism. Its function is as follows. Catalyzes the reversible formation of acyl-phosphate (acyl-PO(4)) from acyl-[acyl-carrier-protein] (acyl-ACP). This enzyme utilizes acyl-ACP as fatty acyl donor, but not acyl-CoA. The protein is Phosphate acyltransferase of Paraburkholderia phymatum (strain DSM 17167 / CIP 108236 / LMG 21445 / STM815) (Burkholderia phymatum).